Reading from the N-terminus, the 547-residue chain is CTP synthase (547 aa).

The interval 1–265 (MARFIFITGG…DQAVLDAFQI (265 aa)) is amidoligase domain. Residue serine 13 participates in CTP binding. Residue serine 13 coordinates UTP. ATP contacts are provided by residues 14-19 (SLGKGL) and aspartate 71. Aspartate 71 and glutamate 139 together coordinate Mg(2+). Residues 146-148 (DIE), 186-191 (KTKPTQ), and lysine 222 contribute to the CTP site. Residues 186 to 191 (KTKPTQ) and lysine 222 each bind UTP. The 256-residue stretch at 291 to 546 (KIAIVGKYVQ…VRAAKESSRL (256 aa)) folds into the Glutamine amidotransferase type-1 domain. Glycine 353 serves as a coordination point for L-glutamine. Residue cysteine 380 is the Nucleophile; for glutamine hydrolysis of the active site. L-glutamine is bound by residues 381–384 (LGMQ), glutamate 404, and arginine 474. Catalysis depends on residues histidine 519 and glutamate 521.

It belongs to the CTP synthase family. As to quaternary structure, homotetramer.

It catalyses the reaction UTP + L-glutamine + ATP + H2O = CTP + L-glutamate + ADP + phosphate + 2 H(+). The catalysed reaction is L-glutamine + H2O = L-glutamate + NH4(+). It carries out the reaction UTP + NH4(+) + ATP = CTP + ADP + phosphate + 2 H(+). It functions in the pathway pyrimidine metabolism; CTP biosynthesis via de novo pathway; CTP from UDP: step 2/2. Allosterically activated by GTP, when glutamine is the substrate; GTP has no effect on the reaction when ammonia is the substrate. The allosteric effector GTP functions by stabilizing the protein conformation that binds the tetrahedral intermediate(s) formed during glutamine hydrolysis. Inhibited by the product CTP, via allosteric rather than competitive inhibition. Catalyzes the ATP-dependent amination of UTP to CTP with either L-glutamine or ammonia as the source of nitrogen. Regulates intracellular CTP levels through interactions with the four ribonucleotide triphosphates. This is CTP synthase from Ruegeria pomeroyi (strain ATCC 700808 / DSM 15171 / DSS-3) (Silicibacter pomeroyi).